The chain runs to 129 residues: Phosphoribosyl-AMP cyclohydrolase (129 aa).

Asp86 serves as a coordination point for Mg(2+). Residue Cys87 participates in Zn(2+) binding. The Mg(2+) site is built by Asp88 and Asp90. Zn(2+)-binding residues include Cys104 and Cys111.

The protein belongs to the PRA-CH family. As to quaternary structure, homodimer. Requires Mg(2+) as cofactor. The cofactor is Zn(2+).

Its subcellular location is the cytoplasm. It catalyses the reaction 1-(5-phospho-beta-D-ribosyl)-5'-AMP + H2O = 1-(5-phospho-beta-D-ribosyl)-5-[(5-phospho-beta-D-ribosylamino)methylideneamino]imidazole-4-carboxamide. Its pathway is amino-acid biosynthesis; L-histidine biosynthesis; L-histidine from 5-phospho-alpha-D-ribose 1-diphosphate: step 3/9. Catalyzes the hydrolysis of the adenine ring of phosphoribosyl-AMP. The chain is Phosphoribosyl-AMP cyclohydrolase from Ignicoccus hospitalis (strain KIN4/I / DSM 18386 / JCM 14125).